The sequence spans 553 residues: LIM domain-containing protein B (553 aa).

The tract at residues Leu-43–Asn-115 is disordered. Low complexity predominate over residues Gly-99–Asn-114. LIM zinc-binding domains lie at Pro-205–Ser-262, Pro-263–Arg-322, Glu-328–Leu-387, Asn-388–Arg-447, and Gln-448–Glu-505. The segment at Glu-534 to Lys-553 is disordered.

It localises to the cytoplasm. The protein resides in the cell cortex. The protein localises to the cytoskeleton. Regulates and controls rearrangements of the actin cytoskeleton. Required for tip formation, morphogenesis, cell adhesion and motility, chemotaxis and aggregates formation. May function downstream of paxB. This chain is LIM domain-containing protein B (limB), found in Dictyostelium discoideum (Social amoeba).